A 436-amino-acid chain; its full sequence is Glutamyl-tRNA reductase (436 aa).

Substrate-binding positions include 49 to 52 (TCNR), S109, 114 to 116 (EGQ), and Q120. C50 (nucleophile) is an active-site residue. 198 to 203 (GAGRMS) serves as a coordination point for NADP(+).

Belongs to the glutamyl-tRNA reductase family. In terms of assembly, homodimer.

The catalysed reaction is (S)-4-amino-5-oxopentanoate + tRNA(Glu) + NADP(+) = L-glutamyl-tRNA(Glu) + NADPH + H(+). It functions in the pathway porphyrin-containing compound metabolism; protoporphyrin-IX biosynthesis; 5-aminolevulinate from L-glutamyl-tRNA(Glu): step 1/2. It participates in porphyrin-containing compound metabolism; chlorophyll biosynthesis. Catalyzes the NADPH-dependent reduction of glutamyl-tRNA(Glu) to glutamate 1-semialdehyde (GSA). This is Glutamyl-tRNA reductase from Prochlorococcus marinus (strain MIT 9215).